The sequence spans 70 residues: Melittin-N (70 aa).

A signal peptide spans M1 to A21. Positions A22 to A43 are cleaved as a propeptide — removed by a dipeptidylpeptidase. Position 44 is an N-formylglycine; partial (G44). A Glutamine amide modification is found at Q69.

The protein belongs to the melittin family. As to quaternary structure, monomer (in solution and for integration into membranes), homotetramer (in solution and potentially as a toroidal pore in membranes), and potenially homomultimer (as a toroidal pore in membranes). In terms of tissue distribution, expressed by the venom gland.

Its subcellular location is the secreted. The protein localises to the target cell membrane. Functionally, main toxin of bee venom with strong hemolytic activity and antimicrobial activity. It has enhancing effects on bee venom phospholipase A2 activity. This amphipathic toxin binds to negatively charged membrane surface and forms pore by inserting into lipid bilayers inducing the leakage of ions and molecules and the enhancement of permeability that ultimately leads to cell lysis. It acts as a voltage-gated pore with higher selectivity for anions over cations. The ion conductance has been shown to be voltage-dependent. Self-association of melittin in membranes is promoted by high ionic strength, but not by the presence of negatively charged lipids. In vivo, intradermal injection into healthy human volunteers produce sharp pain sensation and an inflammatory response. It produces pain by activating primary nociceptor cells directly and indirectly due to its ability to activate plasma membrane phospholipase A2 and its pore-forming activity. Shows lower cytotoxicity when tested on E.coli and cancer cell lines than melittin, as well as lower anti-inflammatory properties and lower properties to interact to small unilamellar liposomes. In Apis cerana (Indian honeybee), this protein is Melittin-N (MELT).